The following is a 509-amino-acid chain: Autophagy-related protein 16 (509 aa).

7 WD repeats span residues 223–262 (AHEG…LIKS), 265–304 (GSLG…VRHT), 307–347 (GHTD…CTNT), 349–388 (LFTS…LLSE), 391–430 (GHSS…ICGT), 437–478 (RLAS…SILK), and 480–509 (QTSP…CTWT).

It belongs to the WD repeat ATG16 family.

Its function is as follows. May play a role in autophagy. The polypeptide is Autophagy-related protein 16 (Arabidopsis thaliana (Mouse-ear cress)).